Reading from the N-terminus, the 191-residue chain is Thymidylate kinase (191 aa).

7-14 (GVDGVGKS) serves as a coordination point for ATP.

It belongs to the thymidylate kinase family.

It carries out the reaction dTMP + ATP = dTDP + ADP. In terms of biological role, phosphorylation of dTMP to form dTDP in both de novo and salvage pathways of dTTP synthesis. The sequence is that of Thymidylate kinase from Helicobacter pylori (strain HPAG1).